The following is a 280-amino-acid chain: Pre-mRNA-splicing factor PRP21 (280 aa).

The SURP motif 1 repeat unit spans residues 11 to 49 (DIKTTVNYIKQHGVEFENKLLEDERFSFIKKDDPLHEYY). The segment at 53 to 72 (MNEPTDTVSGEDNDRKSERE) is disordered. An SURP motif 2 repeat occupies 95 to 135 (VIKLTARYYAKDKSIVEQMISKDGEARLNFMNSSHPLHKTF). Composition is skewed to basic and acidic residues over residues 246–261 (EKIVSDQGKQKGGDSK) and 269–280 (AVGETRLKKSKK). Positions 246–280 (EKIVSDQGKQKGGDSKGKKRKIRAVGETRLKKSKK) are disordered.

As to quaternary structure, belongs to the CWC complex (or CEF1-associated complex), a spliceosome sub-complex reminiscent of a late-stage spliceosome composed of the U2, U5 and U6 snRNAs and at least BUD13, BUD31, BRR2, CDC40, CEF1, CLF1, CUS1, CWC2, CWC15, CWC21, CWC22, CWC23, CWC24, CWC25, CWC27, ECM2, HSH155, IST3, ISY1, LEA1, MSL1, NTC20, PRP8, PRP9, PRP11, PRP19, PRP21, PRP22, PRP45, PRP46, SLU7, SMB1, SMD1, SMD2, SMD3, SMX2, SMX3, SNT309, SNU114, SPP2, SYF1, SYF2, RSE1 and YJU2.

It is found in the nucleus. In terms of biological role, mRNA splicing factors, PRP9, PRP11, and PRP21, are necessary for binding of the U2 snRNP to the pre-mRNA in an early step of spliceosome assembly. This Saccharomyces cerevisiae (strain ATCC 204508 / S288c) (Baker's yeast) protein is Pre-mRNA-splicing factor PRP21 (PRP21).